Consider the following 227-residue polypeptide: LysM and putative peptidoglycan-binding domain-containing protein 1 (227 aa).

Residues Ser23 and Ser33 each carry the phosphoserine modification. Positions 40–84 (LEHQLEPGDTLAGLALKYGVTMEQIKRTNRLYTNDSIFLKKTLYI) constitute a LysM domain. A disordered region spans residues 95 to 157 (NGLDSEEEEN…PSHDLSASDF (63 aa)). Positions 98–108 (DSEEEENDGEE) are enriched in acidic residues. A Phosphoserine modification is found at Ser99. Residues 143–152 (QGTSTPSHDL) show a composition bias toward polar residues. Phosphoserine is present on residues Ser166, Ser181, Ser194, and Ser212. The segment at 169-227 (KKAAAQKLRKGESGVPEEDTGLYPSSPRMQQRAVLGPVPLTRTSRTQTLRDQEDEIFKL) is disordered. Residues 216-227 (TLRDQEDEIFKL) show a composition bias toward basic and acidic residues.

The chain is LysM and putative peptidoglycan-binding domain-containing protein 1 (Lysmd1) from Rattus norvegicus (Rat).